The chain runs to 278 residues: Lectin 6 (278 aa).

A signal peptide spans 1–23; the sequence is MTLSSALIKIFITFLFLQNHVNS. 3 N-linked (GlcNAc...) asparagine glycosylation sites follow: Asn-116, Asn-139, and Asn-271.

This sequence belongs to the leguminous lectin family.

Functionally, may be involved in arbuscular mycorrhizal (AM) symbiosis with AM fungi. This Medicago truncatula (Barrel medic) protein is Lectin 6.